The following is a 697-amino-acid chain: Mediator of RNA polymerase II transcription subunit 16 (697 aa).

WD repeat units follow at residues 68–107 (GHQEVITCLEWDQSGSRLLSADADGRIKCWGMTDHLANSW), 199–241 (RCRV…VSEK), 264–308 (DKFP…LPLN), and 622–663 (NQGS…CLPV).

It belongs to the Mediator complex subunit 16 family. In terms of assembly, component of the Mediator complex.

The protein localises to the nucleus. Functionally, component of the Mediator complex, a coactivator involved in the regulated transcription of nearly all RNA polymerase II-dependent genes. Mediator functions as a bridge to convey information from gene-specific regulatory proteins to the basal RNA polymerase II transcription machinery. Mediator is recruited to promoters by direct interactions with regulatory proteins and serves as a scaffold for the assembly of a functional preinitiation complex with RNA polymerase II and the general transcription factors. The sequence is that of Mediator of RNA polymerase II transcription subunit 16 (med16) from Xenopus laevis (African clawed frog).